Here is a 698-residue protein sequence, read N- to C-terminus: SHC SH2 domain-binding protein 1 homolog B (698 aa).

PbH1 repeat units follow at residues Cys-480–Pro-502, Gly-503–Asp-524, and Ile-532–Lys-554.

The protein resides in the midbody. It localises to the cytoplasm. It is found in the cytoskeleton. The protein localises to the spindle. In terms of biological role, may play a role in signaling pathways governing cellular proliferation. This Xenopus laevis (African clawed frog) protein is SHC SH2 domain-binding protein 1 homolog B (shcbp1-b).